An 87-amino-acid chain; its full sequence is Small ribosomal subunit protein bS20 (87 aa).

It belongs to the bacterial ribosomal protein bS20 family.

Its function is as follows. Binds directly to 16S ribosomal RNA. The polypeptide is Small ribosomal subunit protein bS20 (Nitrosomonas europaea (strain ATCC 19718 / CIP 103999 / KCTC 2705 / NBRC 14298)).